The chain runs to 152 residues: Ribosome maturation factor RimP (152 aa).

Belongs to the RimP family.

The protein resides in the cytoplasm. Functionally, required for maturation of 30S ribosomal subunits. The protein is Ribosome maturation factor RimP of Teredinibacter turnerae (strain ATCC 39867 / T7901).